The sequence spans 122 residues: uncharacterized protein (122 aa).

A run of 2 helical transmembrane segments spans residues 36 to 56 (SVRS…YSQF) and 72 to 92 (AVFL…FSTD).

Its subcellular location is the membrane. This is an uncharacterized protein from Saccharomyces cerevisiae (strain ATCC 204508 / S288c) (Baker's yeast).